The following is a 217-amino-acid chain: 3-isopropylmalate dehydratase small subunit (217 aa).

This sequence belongs to the LeuD family. LeuD type 1 subfamily. In terms of assembly, heterodimer of LeuC and LeuD.

It catalyses the reaction (2R,3S)-3-isopropylmalate = (2S)-2-isopropylmalate. It participates in amino-acid biosynthesis; L-leucine biosynthesis; L-leucine from 3-methyl-2-oxobutanoate: step 2/4. In terms of biological role, catalyzes the isomerization between 2-isopropylmalate and 3-isopropylmalate, via the formation of 2-isopropylmaleate. The protein is 3-isopropylmalate dehydratase small subunit of Paracidovorax citrulli (strain AAC00-1) (Acidovorax citrulli).